Reading from the N-terminus, the 218-residue chain is Elongation factor Ts (218 aa).

Residues 82–85 (TDFV) are involved in Mg(2+) ion dislocation from EF-Tu.

It belongs to the EF-Ts family.

The protein resides in the cytoplasm. In terms of biological role, associates with the EF-Tu.GDP complex and induces the exchange of GDP to GTP. It remains bound to the aminoacyl-tRNA.EF-Tu.GTP complex up to the GTP hydrolysis stage on the ribosome. The polypeptide is Elongation factor Ts (Prochlorococcus marinus (strain MIT 9303)).